A 471-amino-acid polypeptide reads, in one-letter code: Type 2 glycosyltransferase (471 aa).

A helical transmembrane segment spans residues 4-24 (ILGWFWAFVSAFVLRYLRTIV). 3 N-linked (GlcNAc...) asparagine glycosylation sites follow: asparagine 29, asparagine 88, and asparagine 222. 3 consecutive transmembrane segments (helical) span residues 305 to 325 (CLQT…FYSL), 339 to 359 (MAFT…KLWG), and 368 to 388 (VIYI…KFWG). N-linked (GlcNAc...) asparagine glycosylation is present at asparagine 458.

The protein belongs to the GT2 glycosyltransferase family.

It is found in the cell membrane. Its function is as follows. Glycosyltransferase involved in the maintenance of the outermost surface of the fungal cell wall. Likely functions in the synthesis of a currently unknown, potentially minor but widespread, extracellular or outer cell wall polysaccharide which plays a key role in facilitating many interactions between plants and fungi by enabling hyphal growth on solid matrices. This Zymoseptoria tritici (strain CBS 115943 / IPO323) (Speckled leaf blotch fungus) protein is Type 2 glycosyltransferase.